We begin with the raw amino-acid sequence, 77 residues long: Major outer membrane lipoprotein Lpp (77 aa).

The N-terminal stretch at 1–19 is a signal peptide; it reads MNRTKLVLGAVILGSHSAG. Cysteine 20 carries N-palmitoyl cysteine lipidation. Residue cysteine 20 is the site of S-diacylglycerol cysteine attachment. 2 consecutive repeats follow at residues 23–33 and 37–47; these read NAKIDQLSSDV and NAKVDQLSNDV. The stretch at 26-74 forms a coiled coil; it reads IDQLSSDVQTLNAKVDQLSNDVNAMRSDVQAAKDDAARANQRLDNQAHA. Positions 56-77 are disordered; that stretch reads AAKDDAARANQRLDNQAHAYKK. Lysine 77 is modified (N6-murein peptidoglycan lysine).

It belongs to the Lpp family. Homotrimer.

Its subcellular location is the cell outer membrane. It localises to the secreted. The protein resides in the cell wall. In terms of biological role, a highly abundant outer membrane lipoprotein that controls the distance between the inner and outer membranes. The only protein known to be covalently linked to the peptidoglycan network (PGN). Also non-covalently binds the PGN. The link between the cell outer membrane and PGN contributes to maintenance of the structural and functional integrity of the cell envelope, and maintains the correct distance between the PGN and the outer membrane. The protein is Major outer membrane lipoprotein Lpp of Serratia marcescens.